Here is a 123-residue protein sequence, read N- to C-terminus: Histone H2B (123 aa).

Positions 1-32 are disordered; that stretch reads MAPKAPGKGAKKAAKSKAPRAPGDRKRKRTRR. Basic residues predominate over residues 9-18; sequence GAKKAAKSKA. O-linked (GlcNAc) serine glycosylation is present at serine 110. Lysine 118 participates in a covalent cross-link: Glycyl lysine isopeptide (Lys-Gly) (interchain with G-Cter in ubiquitin).

It belongs to the histone H2B family. The nucleosome is a histone octamer containing two molecules each of H2A, H2B, H3 and H4 assembled in one H3-H4 heterotetramer and two H2A-H2B heterodimers. The octamer wraps approximately 147 bp of DNA. Post-translationally, monoubiquitination of Lys-118 gives a specific tag for epigenetic transcriptional activation and is also prerequisite for histone H3 'Lys-4' and 'Lys-79' methylation. In terms of processing, glcNAcylation at Ser-110 promotes monoubiquitination of Lys-118. It fluctuates in response to extracellular glucose, and associates with transcribed genes.

The protein resides in the nucleus. It localises to the chromosome. Functionally, core component of nucleosome. Nucleosomes wrap and compact DNA into chromatin, limiting DNA accessibility to the cellular machineries which require DNA as a template. Histones thereby play a central role in transcription regulation, DNA repair, DNA replication and chromosomal stability. DNA accessibility is regulated via a complex set of post-translational modifications of histones, also called histone code, and nucleosome remodeling. The chain is Histone H2B from Holothuria tubulosa (Tubular sea cucumber).